Reading from the N-terminus, the 80-residue chain is Serine palmitoyltransferase small subunit B (80 aa).

Over 1 to 11 (MDMKNMREYMS) the chain is Cytoplasmic. A helical transmembrane segment spans residues 12-29 (WLYYQYLLITGIYVLEPW). Residues 30 to 36 (EQSIFNT) are Lumenal-facing. A helical transmembrane segment spans residues 37–57 (VLFTMVAMVIYTSYVFVPIHV). The Cytoplasmic segment spans residues 58 to 80 (RLALEFFCELVGGQPESTVALMT).

Belongs to the SPTSS family. SPTSSB subfamily. In terms of assembly, component of the serine palmitoyltransferase (SPT) complex, which is composed of SPTLC1, SPTLC2 or SPTLC3 and SPTSSA or SPTSSB. The heterodimer consisting of SPTLC1 and SPTLC2/SPTLC3 forms the catalytic core of the enzyme, while SPTSSA or SPTSSB subunits determine substrate specificity. SPT also interacts with ORMDL proteins, especially ORMDL3, which negatively regulate SPT activity in the presence of ceramides.

The protein localises to the endoplasmic reticulum membrane. It participates in lipid metabolism; sphingolipid metabolism. Functionally, component of the serine palmitoyltransferase multisubunit enzyme (SPT) that catalyzes the initial and rate-limiting step in sphingolipid biosynthesis by condensing L-serine and activated acyl-CoA (most commonly palmitoyl-CoA) to form long-chain bases. The SPT complex is composed of SPTLC1, SPTLC2 or SPTLC3 and SPTSSA or SPTSSB. Within this complex, the heterodimer consisting of SPTLC1 and SPTLC2/SPTLC3 forms the catalytic core. Within the SPT complex, SPTSSB stimulates the catalytic activity and plays a role in substrate specificity. SPT complexes with this subunit showing a preference for longer acyl-CoAs. The SPTLC1-SPTLC2-SPTSSB complex shows a strong preference for C18-CoA substrate, while the SPTLC1-SPTLC3-SPTSSB isozyme displays an ability to use a broader range of acyl-CoAs, without apparent preference. The polypeptide is Serine palmitoyltransferase small subunit B (sptssb) (Danio rerio (Zebrafish)).